Reading from the N-terminus, the 306-residue chain is Replication termination factor 2 (306 aa).

A disordered region spans residues 192 to 306 (RAKLEKKTKK…HWVTHTSYCF (115 aa)). The span at 226-240 (GKSEEADPDPREKKS) shows a compositional bias: basic and acidic residues. Position 287 is a phosphoserine (Ser287).

The protein belongs to the rtf2 family. In terms of assembly, interacts with DDI2; probably also interacts with DDI1. In terms of processing, undergoes proteasomal degradation, via DDI1 and DDI2. Removal from stalled replisomes and degradation are required for genome stability.

It is found in the chromosome. Functionally, replication termination factor which is a component of the elongating replisome. Required for ATR pathway signaling upon DNA damage and has a positive activity during DNA replication. Might function to facilitate fork pausing at replication fork barriers like the rDNA. May be globally required to stimulate ATR signaling after the fork stalls or encounters a lesion. Interacts with nascent DNA. The chain is Replication termination factor 2 from Rattus norvegicus (Rat).